The primary structure comprises 122 residues: Large ribosomal subunit protein uL14 (122 aa).

Belongs to the universal ribosomal protein uL14 family. As to quaternary structure, part of the 50S ribosomal subunit. Forms a cluster with proteins L3 and L19. In the 70S ribosome, L14 and L19 interact and together make contacts with the 16S rRNA in bridges B5 and B8.

Functionally, binds to 23S rRNA. Forms part of two intersubunit bridges in the 70S ribosome. The polypeptide is Large ribosomal subunit protein uL14 (Rhizobium etli (strain CIAT 652)).